The following is a 523-amino-acid chain: GMP synthase [glutamine-hydrolyzing] (523 aa).

Positions 8–205 (KILILDFGSQ…VVKICGCERN (198 aa)) constitute a Glutamine amidotransferase type-1 domain. Residue cysteine 85 is the Nucleophile of the active site. Active-site residues include histidine 179 and glutamate 181. A GMPS ATP-PPase domain is found at 206 to 398 (WTPENIIEDA…LGLPAEMLNR (193 aa)). Residue 233–239 (SGGVDSS) coordinates ATP.

In terms of assembly, homodimer.

The catalysed reaction is XMP + L-glutamine + ATP + H2O = GMP + L-glutamate + AMP + diphosphate + 2 H(+). It functions in the pathway purine metabolism; GMP biosynthesis; GMP from XMP (L-Gln route): step 1/1. Catalyzes the synthesis of GMP from XMP. This Pasteurella multocida (strain Pm70) protein is GMP synthase [glutamine-hydrolyzing].